Reading from the N-terminus, the 714-residue chain is Fatty acid oxidation complex subunit alpha (714 aa).

Positions 1–190 (MEMASAFTLN…KLGLVDDVVP (190 aa)) are enoyl-CoA hydratase. The segment at 306–714 (APLNSVGILG…FWKTTATDLQ (409 aa)) is 3-hydroxyacyl-CoA dehydrogenase.

It in the N-terminal section; belongs to the enoyl-CoA hydratase/isomerase family. In the central section; belongs to the 3-hydroxyacyl-CoA dehydrogenase family. Heterotetramer of two alpha chains (FadJ) and two beta chains (FadI).

The protein resides in the cytoplasm. It carries out the reaction a (3S)-3-hydroxyacyl-CoA = a (2E)-enoyl-CoA + H2O. The enzyme catalyses a 4-saturated-(3S)-3-hydroxyacyl-CoA = a (3E)-enoyl-CoA + H2O. It catalyses the reaction a (3S)-3-hydroxyacyl-CoA + NAD(+) = a 3-oxoacyl-CoA + NADH + H(+). The catalysed reaction is (3S)-3-hydroxybutanoyl-CoA = (3R)-3-hydroxybutanoyl-CoA. It functions in the pathway lipid metabolism; fatty acid beta-oxidation. Its function is as follows. Catalyzes the formation of a hydroxyacyl-CoA by addition of water on enoyl-CoA. Also exhibits 3-hydroxyacyl-CoA epimerase and 3-hydroxyacyl-CoA dehydrogenase activities. This is Fatty acid oxidation complex subunit alpha from Escherichia coli O6:H1 (strain CFT073 / ATCC 700928 / UPEC).